Reading from the N-terminus, the 292-residue chain is Protease HtpX (292 aa).

The next 2 membrane-spanning stretches (helical) occupy residues 5–25 (IFLF…VMSL) and 34–54 (SGLL…SLLL). Histidine 140 is a Zn(2+) binding site. Glutamate 141 is a catalytic residue. Histidine 144 contacts Zn(2+). Helical transmembrane passes span 155–175 (LLQG…GGII) and 193–213 (IIVF…AMWF). Glutamate 218 is a binding site for Zn(2+).

The protein belongs to the peptidase M48B family. Zn(2+) is required as a cofactor.

The protein resides in the cell inner membrane. The protein is Protease HtpX of Xanthomonas axonopodis pv. citri (strain 306).